The primary structure comprises 108 residues: MSDSNSRLVYSTQTGRIEEPKTAPVRPKGDGIVRIQRQTSGRKGKGVCLITGIEMNDAELTKLAAELKKKCGCGGAVKEGIIEIQGDKRDLIKSLLEAKGMKVKLAGG.

Polar residues predominate over residues 1–15 (MSDSNSRLVYSTQTG). The tract at residues 1-29 (MSDSNSRLVYSTQTGRIEEPKTAPVRPKG) is disordered. Positions 16-29 (RIEEPKTAPVRPKG) are enriched in basic and acidic residues.

This sequence belongs to the SUI1 family.

This is an uncharacterized protein from Salmonella typhi.